The primary structure comprises 70 residues: Small ribosomal subunit protein bS21 (70 aa).

This sequence belongs to the bacterial ribosomal protein bS21 family.

The polypeptide is Small ribosomal subunit protein bS21 (Sulfurovum sp. (strain NBC37-1)).